A 323-amino-acid polypeptide reads, in one-letter code: UDP-glucuronate 4-epimerase (323 aa).

Position 11–13 (11–13 (GFI)) interacts with NAD(+). Residue tyrosine 152 is the Proton acceptor of the active site. Lysine 156 contacts NAD(+).

Belongs to the NAD(P)-dependent epimerase/dehydratase family. It depends on NAD(+) as a cofactor.

The catalysed reaction is UDP-alpha-D-glucuronate = UDP-alpha-D-galacturonate. In terms of biological role, catalyzes the interconversion of UDP-D-glucuronic acid (UDP-GlcA) and UDP-D-galacturonic acid (UDP-GalA). The chain is UDP-glucuronate 4-epimerase from Thermodesulfobacterium geofontis (strain OPF15).